A 541-amino-acid polypeptide reads, in one-letter code: Arginine--tRNA ligase (541 aa).

A 'HIGH' region motif is present at residues 119-129; sequence ANPTGPLHIGH.

It belongs to the class-I aminoacyl-tRNA synthetase family. Monomer.

Its subcellular location is the cytoplasm. The catalysed reaction is tRNA(Arg) + L-arginine + ATP = L-arginyl-tRNA(Arg) + AMP + diphosphate. The chain is Arginine--tRNA ligase from Helicobacter pylori (strain HPAG1).